We begin with the raw amino-acid sequence, 433 residues long: N-lysine methyltransferase SMYD2 (433 aa).

Residues 7-241 (GGLERFCSPG…PGEEVFTSYI (235 aa)) enclose the SET domain. 17-19 (KGR) contacts S-adenosyl-L-methionine. C52, C55, C65, C68, C74, C78, H86, and C90 together coordinate Zn(2+). The MYND-type zinc-finger motif lies at 52–90 (CEFCFARKEGLSKCGRCKQAFYCNVECQKEDWPMHKLEC). Residues H137, 206 to 207 (NH), and 258 to 260 (YFF) each bind S-adenosyl-L-methionine.

The protein belongs to the class V-like SAM-binding methyltransferase superfamily. In terms of assembly, interacts with RNA polymerase II and HELZ. Interacts with SIN3A and HDAC1. Interacts (via MYND-type zinc finger) with EPB41L3. Interacts (via SET domain) with p53/TP53. Interacts with RB1 and HSP90AA1.

The protein localises to the cytoplasm. It localises to the cytosol. Its subcellular location is the nucleus. The enzyme catalyses L-lysyl(4)-[histone H3] + 3 S-adenosyl-L-methionine = N(6),N(6),N(6)-trimethyl-L-lysyl(4)-[histone H3] + 3 S-adenosyl-L-homocysteine + 3 H(+). The catalysed reaction is L-lysyl-[protein] + S-adenosyl-L-methionine = N(6)-methyl-L-lysyl-[protein] + S-adenosyl-L-homocysteine + H(+). Functionally, protein-lysine N-methyltransferase that methylates both histones and non-histone proteins, including p53/TP53 and RB1. Specifically trimethylates histone H3 'Lys-4' (H3K4me3) in vivo. The activity requires interaction with HSP90alpha. Shows even higher methyltransferase activity on p53/TP53. Monomethylates 'Lys-370' of p53/TP53, leading to decreased DNA-binding activity and subsequent transcriptional regulation activity of p53/TP53. Monomethylates RB1 at 'Lys-860'. This Sus scrofa (Pig) protein is N-lysine methyltransferase SMYD2 (SMYD2).